A 279-amino-acid chain; its full sequence is Tryptophan synthase alpha chain (279 aa).

Catalysis depends on proton acceptor residues Glu50 and Asp61.

The protein belongs to the TrpA family. In terms of assembly, tetramer of two alpha and two beta chains.

It catalyses the reaction (1S,2R)-1-C-(indol-3-yl)glycerol 3-phosphate + L-serine = D-glyceraldehyde 3-phosphate + L-tryptophan + H2O. It participates in amino-acid biosynthesis; L-tryptophan biosynthesis; L-tryptophan from chorismate: step 5/5. Functionally, the alpha subunit is responsible for the aldol cleavage of indoleglycerol phosphate to indole and glyceraldehyde 3-phosphate. This Brucella melitensis biotype 1 (strain ATCC 23456 / CCUG 17765 / NCTC 10094 / 16M) protein is Tryptophan synthase alpha chain.